Consider the following 749-residue polypeptide: Cytosolic phospholipase A2 (749 aa).

Residues M1–S178 are phospholipid binding. The residue at position 2 (S2) is a Phosphoserine. In terms of domain architecture, C2 spans P6 to F122. Residues D40, T41, D43, N65, D93, A94, and N95 each contribute to the Ca(2+) site. In terms of domain architecture, PLA2c spans S140–N740. S228 serves as the catalytic Nucleophile. T268 is modified (phosphothreonine). The segment at A426–N458 is disordered. Phosphoserine is present on residues S434, S435, and S437. Basic and acidic residues predominate over residues G446–Q457. Phosphoserine; by MAPK is present on S505. Phosphoserine is present on S515. K541 is covalently cross-linked (Glycyl lysine isopeptide (Lys-Gly) (interchain with G-Cter in SUMO2)). D549 functions as the Proton acceptor in the catalytic mechanism. K606 participates in a covalent cross-link: Glycyl lysine isopeptide (Lys-Gly) (interchain with G-Cter in SUMO2). Phosphoserine is present on residues S727 and S729.

Interacts with KAT5. Phosphorylated at both Ser-505 and Ser-727 in response to mitogenic stimuli. Detected in granulosa cells after stimulation with chorionic gonadotropin (at protein level).

Its subcellular location is the cytoplasm. The protein resides in the golgi apparatus membrane. The protein localises to the nucleus envelope. It carries out the reaction a 1,2-diacyl-sn-glycero-3-phosphocholine + H2O = a 1-acyl-sn-glycero-3-phosphocholine + a fatty acid + H(+). It catalyses the reaction a 1-O-alkyl-2-acyl-sn-glycero-3-phosphocholine + H2O = a 1-O-alkyl-sn-glycero-3-phosphocholine + a fatty acid + H(+). The catalysed reaction is a 1-acyl-sn-glycero-3-phosphocholine + H2O = sn-glycerol 3-phosphocholine + a fatty acid + H(+). The enzyme catalyses 1-hexadecanoyl-2-(5Z,8Z,11Z,14Z-eicosatetraenoyl)-sn-glycero-3-phosphocholine + H2O = 1-hexadecanoyl-sn-glycero-3-phosphocholine + (5Z,8Z,11Z,14Z)-eicosatetraenoate + H(+). It carries out the reaction 1,2-di-(5Z,8Z,11Z,14Z-eicosatetraenoyl)-sn-glycero-3-phosphocholine + H2O = 1-(5Z,8Z,11Z,14Z-eicosatetraenoyl)-sn-glycero-3-phosphocholine + (5Z,8Z,11Z,14Z)-eicosatetraenoate + H(+). It catalyses the reaction 1-octadecanoyl-2-(5Z,8Z,11Z,14Z-eicosatetraenoyl)-sn-glycero-3-phosphocholine + H2O = 1-octadecanoyl-sn-glycero-3-phosphocholine + (5Z,8Z,11Z,14Z)-eicosatetraenoate + H(+). The catalysed reaction is 1-hexadecanoyl-2-(9Z,12Z-octadecadienoyl)-sn-glycero-3-phosphocholine + H2O = (9Z,12Z)-octadecadienoate + 1-hexadecanoyl-sn-glycero-3-phosphocholine + H(+). The enzyme catalyses 1-octadecanoyl-2-(9Z,12Z,15Z-octadecatrienoyl)-sn-glycero-3-phosphocholine + H2O = (9Z,12Z,15Z)-octadecatrienoate + 1-octadecanoyl-sn-glycero-3-phosphocholine + H(+). It carries out the reaction 1-(5Z,8Z,11Z,14Z-eicosatetraenoyl)-2-hexadecanoyl-sn-glycero-3-phosphocholine + H2O = 1-(5Z,8Z,11Z,14Z-eicosatetraenoyl)-sn-glycero-3-phosphocholine + hexadecanoate + H(+). It catalyses the reaction 1-O-hexadecyl-2-(5Z,8Z,11Z,14Z)-eicosatetraenoyl-sn-glycero-3-phosphocholine + H2O = 1-O-hexadecyl-sn-glycero-3-phosphocholine + (5Z,8Z,11Z,14Z)-eicosatetraenoate + H(+). The catalysed reaction is 1,2-di-(9Z-octadecenoyl)-sn-glycero-3-phospho-(1'-sn-glycerol) + H2O = 1-(9Z-octadecenoyl)-sn-glycero-3-phospho-(1'-sn-glycerol) + (9Z)-octadecenoate + H(+). The enzyme catalyses 1-octadecanoyl-2-(5Z,8Z,11Z,14Z-eicosatetraenoyl)-sn-glycero-3-phosphate + H2O = 1-octadecanoyl-sn-glycero-3-phosphate + (5Z,8Z,11Z,14Z)-eicosatetraenoate + H(+). It carries out the reaction 1-hexadecanoyl-sn-glycero-3-phosphocholine + H2O = sn-glycerol 3-phosphocholine + hexadecanoate + H(+). It catalyses the reaction 2-(prostaglandin E2)-sn-glycero-3-phosphoethanolamine + H2O = sn-glycero-3-phosphoethanolamine + prostaglandin E2 + H(+). The catalysed reaction is 2-[(15S)-hydroxy-(5Z,8Z,11Z,13E)-eicosatetraenoyl]-sn-glycero-3-phosphocholine + H2O = (15S)-hydroxy-(5Z,8Z,11Z,13E)-eicosatetraenoate + sn-glycerol 3-phosphocholine + H(+). The enzyme catalyses 2-[(15R)-hydroxy-(5Z,8Z,11Z,13E)-eicosatetraenoyl]-sn-glycero-3-phosphocholine + H2O = (15R)-hydroxy-(5Z,8Z,11Z,13E)-eicosatetraenoate + sn-glycerol 3-phosphocholine + H(+). It carries out the reaction 2-(prostaglandin E2)-sn-glycero-3-phosphocholine + H2O = prostaglandin E2 + sn-glycerol 3-phosphocholine + H(+). It catalyses the reaction 2-[(11R)-hydroxy-(5Z,8Z,12E,14Z)-eicosatetraenoyl]-sn-glycero-3-phosphocholine + H2O = (11R)-hydroxy-(5Z,8Z,12E,14Z)-eicosatetraenoate + sn-glycerol 3-phosphocholine + H(+). The catalysed reaction is 1-(5Z,8Z,11Z,14Z-eicosatetraenoyl)-2-O-hexadecyl-sn-glycero-3-phosphocholine + H2O = 2-O-hexadecyl-sn-glycero-3-phosphocholine + (5Z,8Z,11Z,14Z)-eicosatetraenoate + H(+). The enzyme catalyses 1-octadecanoyl-2-(5Z,8Z,11Z,14Z-eicosatetraenoyl)-sn-glycero-3-phosphocholine + glycerol = 1-(5Z,8Z,11Z,14Z-eicosatetraenoyl)-glycerol + 1-octadecanoyl-sn-glycero-3-phosphocholine. It carries out the reaction 1-octadecanoyl-2-(9Z,12Z,15Z-octadecatrienoyl)-sn-glycero-3-phosphocholine + glycerol = 1-(9Z,12Z,15Z-octadecatrienoyl)-glycerol + 1-octadecanoyl-sn-glycero-3-phosphocholine. Its pathway is membrane lipid metabolism; glycerophospholipid metabolism. It functions in the pathway lipid metabolism; arachidonate metabolism. The protein operates within lipid metabolism; prostaglandin biosynthesis. It participates in lipid metabolism; leukotriene B4 biosynthesis. With respect to regulation, activated by cytosolic calcium, which is necessary for binding to membrane lipids. Activated by phosphorylation in response to mitogenic stimuli. Functionally, has primarily calcium-dependent phospholipase and lysophospholipase activities, with a major role in membrane lipid remodeling and biosynthesis of lipid mediators of the inflammatory response. Plays an important role in embryo implantation and parturition through its ability to trigger prostanoid production. Preferentially hydrolyzes the ester bond of the fatty acyl group attached at sn-2 position of phospholipids (phospholipase A2 activity). Selectively hydrolyzes sn-2 arachidonoyl group from membrane phospholipids, providing the precursor for eicosanoid biosynthesis via the cyclooxygenase pathway. In an alternative pathway of eicosanoid biosynthesis, hydrolyzes sn-2 fatty acyl chain of eicosanoid lysophopholipids to release free bioactive eicosanoids. Hydrolyzes the ester bond of the fatty acyl group attached at sn-1 position of phospholipids (phospholipase A1 activity) only if an ether linkage rather than an ester linkage is present at the sn-2 position. This hydrolysis is not stereospecific. Has calcium-independent phospholipase A2 and lysophospholipase activities in the presence of phosphoinositides. Has O-acyltransferase activity. Catalyzes the transfer of fatty acyl chains from phospholipids to a primary hydroxyl group of glycerol (sn-1 or sn-3), potentially contributing to monoacylglycerol synthesis. This chain is Cytosolic phospholipase A2 (PLA2G4A), found in Bos taurus (Bovine).